We begin with the raw amino-acid sequence, 100 residues long: Protein Tat (100 aa).

The interaction with human CREBBP stretch occupies residues 1-24 (MDPIDPDLEPWKHPGSQPRTVCNN). The transactivation stretch occupies residues 1-48 (MDPIDPDLEPWKHPGSQPRTVCNNCYCKACCYHCIYCFTKKGLGISYG). Residues C22, C25, and C27 each contribute to the Zn(2+) site. The segment at 22–37 (CNNCYCKACCYHCIYC) is cysteine-rich. K28 bears the N6-acetyllysine; by host PCAF mark. Zn(2+) is bound by residues C30, H33, C34, and C37. Residues 38–48 (FTKKGLGISYG) form a core region. Residues 48–58 (GRKKRTTRRRT) are compositionally biased toward basic residues. Residues 48 to 100 (GRKKRTTRRRTAPAGSKNNQDSIPKQPLSQSRGNKEGSEKSTKEVASKTEADQ) are disordered. The short motif at 49-57 (RKKRTTRRR) is the Nuclear localization signal, RNA-binding (TAR), and protein transduction element. The tract at residues 49–87 (RKKRTTRRRTAPAGSKNNQDSIPKQPLSQSRGNKEGSEK) is interaction with the host capping enzyme RNGTT. An N6-acetyllysine; by host EP300 and GCN5L2 mark is found at K50 and K51. Position 52 is an asymmetric dimethylarginine; by host PRMT6 (R52). Residues 63–79 (SKNNQDSIPKQPLSQSR) are compositionally biased toward polar residues. Residue K72 forms a Glycyl lysine isopeptide (Lys-Gly) (interchain with G-Cter in ubiquitin) linkage. Over residues 80–100 (GNKEGSEKSTKEVASKTEADQ) the composition is skewed to basic and acidic residues.

This sequence belongs to the lentiviruses Tat family. As to quaternary structure, interacts with host CCNT1. Associates with the P-TEFb complex composed at least of Tat, P-TEFb (CDK9 and CCNT1), TAR RNA, RNA Pol II. Recruits the HATs CREBBP, TAF1/TFIID, EP300, PCAF and GCN5L2. Interacts with host KAT5/Tip60; this interaction targets the latter to degradation. Interacts with the host deacetylase SIRT1. Interacts with host capping enzyme RNGTT; this interaction stimulates RNGTT. Binds to host KDR, and to the host integrins ITGAV/ITGB3 and ITGA5/ITGB1. Interacts with host KPNB1/importin beta-1 without previous binding to KPNA1/importin alpha-1. Interacts with EIF2AK2. Interacts with host nucleosome assembly protein NAP1L1; this interaction may be required for the transport of Tat within the nucleus, since the two proteins interact at the nuclear rim. Interacts with host C1QBP/SF2P32; this interaction involves lysine-acetylated Tat. Interacts with the host chemokine receptors CCR2, CCR3 and CXCR4. Interacts with host DPP4/CD26; this interaction may trigger an anti-proliferative effect. Interacts with host LDLR. Interacts with the host extracellular matrix metalloproteinase MMP1. Interacts with host PRMT6; this interaction mediates Tat's methylation. Interacts with, and is ubiquitinated by MDM2/Hdm2. Interacts with host PSMC3 and HTATIP2. Interacts with STAB1; this interaction may overcome SATB1-mediated repression of IL2 and IL2RA (interleukin) in T cells by binding to the same domain than HDAC1. Interacts (when acetylated) with human CDK13, thereby increasing HIV-1 mRNA splicing and promoting the production of the doubly spliced HIV-1 protein Nef. Interacts with host TBP; this interaction modulates the activity of transcriptional pre-initiation complex. Interacts with host RELA. Asymmetrical arginine methylation by host PRMT6 seems to diminish the transactivation capacity of Tat and affects the interaction with host CCNT1. In terms of processing, acetylation by EP300, CREBBP, GCN5L2/GCN5 and PCAF regulates the transactivation activity of Tat. EP300-mediated acetylation of Lys-50 promotes dissociation of Tat from the TAR RNA through the competitive binding to PCAF's bromodomain. In addition, the non-acetylated Tat's N-terminus can also interact with PCAF. PCAF-mediated acetylation of Lys-28 enhances Tat's binding to CCNT1. Lys-50 is deacetylated by SIRT1. Post-translationally, polyubiquitination by host MDM2 does not target Tat to degradation, but activates its transactivation function and fosters interaction with CCNT1 and TAR RNA. Phosphorylated by EIF2AK2 on serine and threonine residues adjacent to the basic region important for TAR RNA binding and function. Phosphorylation of Tat by EIF2AK2 is dependent on the prior activation of EIF2AK2 by dsRNA.

Its subcellular location is the host nucleus. The protein resides in the host nucleolus. It localises to the host cytoplasm. It is found in the secreted. Functionally, transcriptional activator that increases RNA Pol II processivity, thereby increasing the level of full-length viral transcripts. Recognizes a hairpin structure at the 5'-LTR of the nascent viral mRNAs referred to as the transactivation responsive RNA element (TAR) and recruits the cyclin T1-CDK9 complex (P-TEFb complex) that will in turn hyperphosphorylate the RNA polymerase II to allow efficient elongation. The CDK9 component of P-TEFb and other Tat-activated kinases hyperphosphorylate the C-terminus of RNA Pol II that becomes stabilized and much more processive. Other factors such as HTATSF1/Tat-SF1, SUPT5H/SPT5, and HTATIP2 are also important for Tat's function. Besides its effect on RNA Pol II processivity, Tat induces chromatin remodeling of proviral genes by recruiting the histone acetyltransferases (HATs) CREBBP, EP300 and PCAF to the chromatin. This also contributes to the increase in proviral transcription rate, especially when the provirus integrates in transcriptionally silent region of the host genome. To ensure maximal activation of the LTR, Tat mediates nuclear translocation of NF-kappa-B by interacting with host RELA. Through its interaction with host TBP, Tat may also modulate transcription initiation. Tat can reactivate a latently infected cell by penetrating in it and transactivating its LTR promoter. In the cytoplasm, Tat is thought to act as a translational activator of HIV-1 mRNAs. Extracellular circulating Tat can be endocytosed by surrounding uninfected cells via the binding to several surface receptors such as CD26, CXCR4, heparan sulfate proteoglycans (HSPG) or LDLR. Neurons are rarely infected, but they internalize Tat via their LDLR. Through its interaction with nuclear HATs, Tat is potentially able to control the acetylation-dependent cellular gene expression. Modulates the expression of many cellular genes involved in cell survival, proliferation or in coding for cytokines or cytokine receptors. Tat plays a role in T-cell and neurons apoptosis. Tat induced neurotoxicity and apoptosis probably contribute to neuroAIDS. Circulating Tat also acts as a chemokine-like and/or growth factor-like molecule that binds to specific receptors on the surface of the cells, affecting many cellular pathways. In the vascular system, Tat binds to ITGAV/ITGB3 and ITGA5/ITGB1 integrins dimers at the surface of endothelial cells and competes with bFGF for heparin-binding sites, leading to an excess of soluble bFGF. The sequence is that of Protein Tat from Pan (chimpanzees).